Here is a 364-residue protein sequence, read N- to C-terminus: DNA replication and repair protein RecF (364 aa).

An ATP-binding site is contributed by 30–37 (GDNAQGKT).

The protein belongs to the RecF family.

Its subcellular location is the cytoplasm. The RecF protein is involved in DNA metabolism; it is required for DNA replication and normal SOS inducibility. RecF binds preferentially to single-stranded, linear DNA. It also seems to bind ATP. The protein is DNA replication and repair protein RecF of Clostridium kluyveri (strain ATCC 8527 / DSM 555 / NBRC 12016 / NCIMB 10680 / K1).